Consider the following 149-residue polypeptide: Large ribosomal subunit protein bL9 (149 aa).

Belongs to the bacterial ribosomal protein bL9 family.

Its function is as follows. Binds to the 23S rRNA. The protein is Large ribosomal subunit protein bL9 of Synechococcus sp. (strain JA-2-3B'a(2-13)) (Cyanobacteria bacterium Yellowstone B-Prime).